Consider the following 796-residue polypeptide: Polyribonucleotide nucleotidyltransferase (796 aa).

The Mg(2+) site is built by D490 and D496. One can recognise a KH domain in the interval 557–616 (PRIESIFINKDKIRNVIGSGGKNIRDICEKTGAKIEIIQDGTVMIYAVNNEAVEYAKSMI). The region spanning 626–693 (GKVFEGTVVE…DREHIQLSMR (68 aa)) is the S1 motif domain. Composition is skewed to low complexity over residues 717 to 728 (DDSCGSTGGSSF), 747 to 759 (GGSS…NSNG), and 769 to 784 (SSNG…SNSR). The segment at 717–796 (DDSCGSTGGS…HDVPRKPRFF (80 aa)) is disordered. Residues 785–796 (NGHDVPRKPRFF) show a composition bias toward basic and acidic residues.

This sequence belongs to the polyribonucleotide nucleotidyltransferase family. The cofactor is Mg(2+).

It is found in the cytoplasm. It carries out the reaction RNA(n+1) + phosphate = RNA(n) + a ribonucleoside 5'-diphosphate. In terms of biological role, involved in mRNA degradation. Catalyzes the phosphorolysis of single-stranded polyribonucleotides processively in the 3'- to 5'-direction. In Ehrlichia chaffeensis (strain ATCC CRL-10679 / Arkansas), this protein is Polyribonucleotide nucleotidyltransferase.